The chain runs to 31 residues: Photosystem II reaction center protein T (31 aa).

The helical transmembrane segment at 3–23 (ALVYTFLLISTLGIIFFGIFF) threads the bilayer.

It belongs to the PsbT family. As to quaternary structure, PSII is composed of 1 copy each of membrane proteins PsbA, PsbB, PsbC, PsbD, PsbE, PsbF, PsbH, PsbI, PsbJ, PsbK, PsbL, PsbM, PsbT, PsbY, PsbZ, Psb30/Ycf12, at least 3 peripheral proteins of the oxygen-evolving complex and a large number of cofactors. It forms dimeric complexes.

The protein localises to the plastid. The protein resides in the chloroplast thylakoid membrane. In terms of biological role, found at the monomer-monomer interface of the photosystem II (PS II) dimer, plays a role in assembly and dimerization of PSII. PSII is a light-driven water plastoquinone oxidoreductase, using light energy to abstract electrons from H(2)O, generating a proton gradient subsequently used for ATP formation. In Nephroselmis olivacea (Green alga), this protein is Photosystem II reaction center protein T.